A 100-amino-acid chain; its full sequence is Urease subunit gamma (100 aa).

The protein belongs to the urease gamma subunit family. In terms of assembly, heterotrimer of UreA (gamma), UreB (beta) and UreC (alpha) subunits. Three heterotrimers associate to form the active enzyme.

It is found in the cytoplasm. The enzyme catalyses urea + 2 H2O + H(+) = hydrogencarbonate + 2 NH4(+). It participates in nitrogen metabolism; urea degradation; CO(2) and NH(3) from urea (urease route): step 1/1. This Nostoc punctiforme (strain ATCC 29133 / PCC 73102) protein is Urease subunit gamma.